The sequence spans 447 residues: Trigger factor (447 aa).

In terms of domain architecture, PPIase FKBP-type spans 188-273; that stretch reads GDKLVIDFEG…VNDIQVAEDF (86 aa).

This sequence belongs to the FKBP-type PPIase family. Tig subfamily.

Its subcellular location is the cytoplasm. It carries out the reaction [protein]-peptidylproline (omega=180) = [protein]-peptidylproline (omega=0). In terms of biological role, involved in protein export. Acts as a chaperone by maintaining the newly synthesized protein in an open conformation. Functions as a peptidyl-prolyl cis-trans isomerase. The chain is Trigger factor from Wolbachia sp. subsp. Brugia malayi (strain TRS).